A 204-amino-acid chain; its full sequence is MGNKWSKSWPQVRDRMRRAAPAPAADGVGAVSQDLAKHGAITSSNTAATNDDCAWLEAQTEEEVGFPVRPQVPLRPMTYKGAFDLSFFLKEKGGLDGLIYSKKRQEILDLWVHNTQGYFPDWQNYTPGPGTXYPLTFGWCFKLVPVDPSEVEEANEGENNCLLHPACQHGIEDEEREVLKWKFDSSLARRHIARELHPEFYKDC.

The tract at residues 1 to 27 (MGNKWSKSWPQVRDRMRRAAPAPAADG) is disordered. Gly2 carries N-myristoyl glycine; by host lipidation. Ser6 bears the Phosphoserine; by host mark. An acidic; interacts with host PACS1 and PACS2; stabilizes the interaction of NEF/MHC-I with host AP1M1; necessary for MHC-I internalization region spans residues 60-63 (TEEE). An SH3-binding; interaction with Src family tyrosine kinases region spans residues 67–76 (PVRPQVPLRP). Positions 70-73 (PQVP) match the PxxP; stabilizes the interaction of NEF/MHC-I with host AP1M1; necessary for MHC-I internalization motif. Residues 106 to 122 (EILDLWVHNTQGYFPDW) form a mediates dimerization, Nef-PTE1 interaction region. Residues 146 to 178 (VDPSEVEEANEGENNCLLHPACQHGIEDEEREV) are binding to ATP6V1H. The Dileucine internalization motif; necessary for CD4 internalization signature appears at 162–163 (LL). Residues 172–173 (ED) carry the Diacidic; necessary for CD4 internalization motif.

The protein belongs to the lentivirus primate group Nef protein family. In terms of assembly, monomer; cytosolic form. Homodimer; membrane bound form. Interacts with Nef associated p21-activated kinase (PAK2); this interaction activates PAK2. Associates with the Nef-MHC-I-AP1 complex; this complex is required for MHC-I internalization. Interacts (via C-terminus) with host PI3-kinase. Interacts with host PACS1; this interaction seems to be weak. Interacts with host PACS2. Interacts with host LCK and MAPK3; these interactions inhibit the kinase activity of the latter. Interacts with host ATP6V1H; this interaction may play a role in CD4 endocytosis. Associates with the CD4-Nef-AP2 complex; this complex is required for CD4 internalization. Interacts with host AP2 subunit alpha and AP2 subunit sigma2. Interacts with TCR-zeta chain; this interaction up-regulates the Fas ligand (FasL) surface expression. Interacts with host HCK, LYN, and SRC; these interactions activate the Src family kinases. Interacts with MAP3K5; this interaction inhibits the Fas and TNFR-mediated death signals. Interacts with beta-COP and PTE1. Interacts with human RACK1; this increases Nef phosphorylation by PKC. Interacts with TP53; this interaction decreases the half-life of TP53, protecting the infected cell against p53-mediated apoptosis. In terms of processing, the virion-associated Nef proteins are cleaved by the viral protease to release the soluble C-terminal core protein. Nef is probably cleaved concomitantly with viral structural proteins on maturation of virus particles. Post-translationally, myristoylated. Phosphorylated on serine residues, probably by host PKCdelta and theta.

It localises to the host cell membrane. It is found in the virion. The protein resides in the secreted. The protein localises to the host Golgi apparatus membrane. Factor of infectivity and pathogenicity, required for optimal virus replication. Alters numerous pathways of T-lymphocyte function and down-regulates immunity surface molecules in order to evade host defense and increase viral infectivity. Alters the functionality of other immunity cells, like dendritic cells, monocytes/macrophages and NK cells. Its function is as follows. In infected CD4(+) T-lymphocytes, down-regulates the surface MHC-I, mature MHC-II, CD4, CD28, CCR5 and CXCR4 molecules. Mediates internalization and degradation of host CD4 through the interaction of with the cytoplasmic tail of CD4, the recruitment of AP-2 (clathrin adapter protein complex 2), internalization through clathrin coated pits, and subsequent transport to endosomes and lysosomes for degradation. Diverts host MHC-I molecules to the trans-Golgi network-associated endosomal compartments by an endocytic pathway to finally target them for degradation. MHC-I down-regulation may involve AP-1 (clathrin adapter protein complex 1) or possibly Src family kinase-ZAP70/Syk-PI3K cascade recruited by PACS2. In consequence infected cells are masked for immune recognition by cytotoxic T-lymphocytes. Decreasing the number of immune receptors also prevents reinfection by more HIV particles (superinfection). Down-regulates host SERINC3 and SERINC5 thereby excluding these proteins from the viral particles. Virion infectivity is drastically higher when SERINC3 or SERINC5 are excluded from the viral envelope, because these host antiviral proteins impair the membrane fusion event necessary for subsequent virion penetration. Functionally, bypasses host T-cell signaling by inducing a transcriptional program nearly identical to that of anti-CD3 cell activation. Interaction with TCR-zeta chain up-regulates the Fas ligand (FasL). Increasing surface FasL molecules and decreasing surface MHC-I molecules on infected CD4(+) cells send attacking cytotoxic CD8+ T-lymphocytes into apoptosis. In terms of biological role, plays a role in optimizing the host cell environment for viral replication without causing cell death by apoptosis. Protects the infected cells from apoptosis in order to keep them alive until the next virus generation is ready to strike. Inhibits the Fas and TNFR-mediated death signals by blocking MAP3K5/ASK1. Decreases the half-life of TP53, protecting the infected cell against p53-mediated apoptosis. Inhibits the apoptotic signals regulated by the Bcl-2 family proteins through the formation of a Nef/PI3-kinase/PAK2 complex that leads to activation of PAK2 and induces phosphorylation of host BAD. Extracellular Nef protein targets CD4(+) T-lymphocytes for apoptosis by interacting with CXCR4 surface receptors. The polypeptide is Protein Nef (Homo sapiens (Human)).